The primary structure comprises 266 residues: Apolipoprotein A-I (266 aa).

The signal sequence occupies residues 1–18 (MKAVVLTLAVLFLTGSQA). A run of 2 repeats spans residues 67 to 88 (LKLLDNWDSLSSTVAKLREQIG) and 89 to 110 (PVTQEFWDNLEKETEVLRQEMN). A 10 X approximate tandem repeats region spans residues 67-266 (LKLLDNWDSL…DEATKKLNSQ (200 aa)). Position 109 is a methionine sulfoxide (M109). One copy of the 3; half-length repeat lies at 111-121 (KDLEEVKKKVQ). 5 tandem repeats follow at residues 122–143 (PYLDEFQSKWHEEVELYRQKVA), 144–165 (PLGAELREGARQKLQELQEKLS), 166–187 (PLGEELRDRARTHVDALRAQLA), 188–209 (PYGEQLRERLAARLQALKEGGG), and 210–231 (AALTEYRAKASEHLSALREKAK). A 9; half-length repeat occupies 232-242 (PALEDLRQGLL). Residues 243–266 (PVLENFRVSLLAAVDEATKKLNSQ) form repeat 10.

This sequence belongs to the apolipoprotein A1/A4/E family. Homodimer. Interacts with APOA1BP and CLU. Component of a sperm activating protein complex (SPAP), consisting of APOA1, an immunoglobulin heavy chain, an immunoglobulin light chain and albumin. Interacts with NDRG1. Interacts with SCGB3A2. Interacts with NAXE and YJEFN3. Post-translationally, glycosylated. Palmitoylated. In terms of processing, phosphorylation sites are present in the extracellular medium.

The protein localises to the secreted. In terms of biological role, participates in the reverse transport of cholesterol from tissues to the liver for excretion by promoting cholesterol efflux from tissues and by acting as a cofactor for the lecithin cholesterol acyltransferase (LCAT). As part of the SPAP complex, activates spermatozoa motility. The chain is Apolipoprotein A-I (APOA1) from Leptonychotes weddellii (Weddell seal).